We begin with the raw amino-acid sequence, 621 residues long: Protein CASP (621 aa).

Over 1 to 574 (MEIVSRAWES…ILATPKSRTV (574 aa)) the chain is Cytoplasmic. 2 coiled-coil regions span residues 101 to 445 (LLKG…VQDI) and 473 to 525 (ILTS…FLQS). Residues 575–595 (FFSYLLILHALIMLVLYKFAF) form a helical; Anchor for type IV membrane protein membrane-spanning segment. The Lumenal portion of the chain corresponds to 596–621 (DQSVVRDAETECEYKFHQHMLDNHKQ).

This sequence belongs to the CASP family.

The protein resides in the golgi apparatus membrane. In terms of biological role, may be involved in intra-Golgi retrograde transport. In Caenorhabditis elegans, this protein is Protein CASP (ceh-44).